A 289-amino-acid polypeptide reads, in one-letter code: MTNNDAAVEAPSSSRASSSKQQPKLEITEKVRVLCLHGYRQDGDAFKNKLGSFRKFTSKYAEFVFISAPHIAAPLESAAEPVPEQRSWWANKDDGTFKGTNKGGPAFGFQDSLRLVEEAWKTQGPFQGLLGFSQGACFVGLICGLAKKKLTSIRPEFAVLSSGFVSGSLVHMSAYEEPVSIPTLHIYGSSDEIIPKDMSALLASHFKNVEVLEHGGGHYFPATAQQKQTYINFFQDRLQEYLEHLELQQSSSVSFIESGAEDNDDDGDANDAEVAAATAAAGSDLDDSD.

Low complexity predominate over residues 1–19; it reads MTNNDAAVEAPSSSRASSS. The tract at residues 1–24 is disordered; sequence MTNNDAAVEAPSSSRASSSKQQPK. Catalysis depends on charge relay system residues Ser-133, Asp-191, and His-218. Positions 253-289 are disordered; the sequence is VSFIESGAEDNDDDGDANDAEVAAATAAAGSDLDDSD. Positions 259–271 are enriched in acidic residues; sequence GAEDNDDDGDAND. A compositionally biased stretch (low complexity) spans 272 to 283; that stretch reads AEVAAATAAAGS.

Belongs to the LovG family.

The chain is Esterase GA18864 from Drosophila pseudoobscura pseudoobscura (Fruit fly).